Reading from the N-terminus, the 383-residue chain is Chaperone protein DnaJ (383 aa).

One can recognise a J domain in the interval 6 to 71; the sequence is DYYEVLGVSK…QKRSQYDQFG (66 aa). A CR-type zinc finger spans residues 141 to 223; sequence GVEKKVKVKK…CKGEGVEIGE (83 aa). Zn(2+) contacts are provided by Cys-154, Cys-157, Cys-171, Cys-174, Cys-197, Cys-200, Cys-211, and Cys-214. 4 CXXCXGXG motif repeats span residues 154–161, 171–178, 197–204, and 211–218; these read CSKCRGDG, CQTCHGTG, CPTCHGEG, and CSKCKGEG.

This sequence belongs to the DnaJ family. As to quaternary structure, homodimer. It depends on Zn(2+) as a cofactor.

Its subcellular location is the cytoplasm. In terms of biological role, participates actively in the response to hyperosmotic and heat shock by preventing the aggregation of stress-denatured proteins and by disaggregating proteins, also in an autonomous, DnaK-independent fashion. Unfolded proteins bind initially to DnaJ; upon interaction with the DnaJ-bound protein, DnaK hydrolyzes its bound ATP, resulting in the formation of a stable complex. GrpE releases ADP from DnaK; ATP binding to DnaK triggers the release of the substrate protein, thus completing the reaction cycle. Several rounds of ATP-dependent interactions between DnaJ, DnaK and GrpE are required for fully efficient folding. Also involved, together with DnaK and GrpE, in the DNA replication of plasmids through activation of initiation proteins. This chain is Chaperone protein DnaJ, found in Porphyromonas gingivalis (strain ATCC BAA-308 / W83).